A 636-amino-acid polypeptide reads, in one-letter code: Polyglycine hydrolase (636 aa).

Positions 1-22 (MHSLSLRRLLTSVLSLCSCSSA) are cleaved as a signal peptide. N-linked (GlcNAc...) asparagine glycosylation is found at Asn-30 and Asn-151. A disulfide bond links Cys-141 and Cys-175. The active site involves Ser-363. N-linked (GlcNAc...) asparagine glycosylation is found at Asn-383 and Asn-481. The disordered stretch occupies residues 512 to 540 (TEDRIVQESKNTGQDPVHPQSAKLVPGPH).

Belongs to the peptidase S12 family.

It localises to the secreted. It catalyses the reaction a glycyl-glycyl-[protein] + H2O = N-terminal glycyl-[protein] + [protein]-C-terminal glycine. Serine-type endopeptidase that cleaves Gly-Gly bonds in the polyglycine linker of host plant class IV chitinases to disrupt their chitin-binding, and thereby plays a role in lowering the defense responses of the host to the fungus. Degrades Z.mays Endochitinase A (CHIA) in vitro, although corn is not its host species. This chain is Polyglycine hydrolase, found in Fusarium vanettenii (strain ATCC MYA-4622 / CBS 123669 / FGSC 9596 / NRRL 45880 / 77-13-4) (Fusarium solani subsp. pisi).